We begin with the raw amino-acid sequence, 121 residues long: Large ribosomal subunit protein bL12 (121 aa).

This sequence belongs to the bacterial ribosomal protein bL12 family. Homodimer. Part of the ribosomal stalk of the 50S ribosomal subunit. Forms a multimeric L10(L12)X complex, where L10 forms an elongated spine to which 2 to 4 L12 dimers bind in a sequential fashion. Binds GTP-bound translation factors.

Forms part of the ribosomal stalk which helps the ribosome interact with GTP-bound translation factors. Is thus essential for accurate translation. The polypeptide is Large ribosomal subunit protein bL12 (Klebsiella pneumoniae (strain 342)).